We begin with the raw amino-acid sequence, 323 residues long: tRNA dimethylallyltransferase (323 aa).

12-19 is an ATP binding site; it reads GPTASGKT. A substrate-binding site is contributed by 14–19; sequence TASGKT. 2 interaction with substrate tRNA regions span residues 37-40 and 161-165; these read DSAL and QRLVR.

It belongs to the IPP transferase family. As to quaternary structure, monomer. The cofactor is Mg(2+).

The catalysed reaction is adenosine(37) in tRNA + dimethylallyl diphosphate = N(6)-dimethylallyladenosine(37) in tRNA + diphosphate. Its function is as follows. Catalyzes the transfer of a dimethylallyl group onto the adenine at position 37 in tRNAs that read codons beginning with uridine, leading to the formation of N6-(dimethylallyl)adenosine (i(6)A). This Stutzerimonas stutzeri (strain A1501) (Pseudomonas stutzeri) protein is tRNA dimethylallyltransferase.